The chain runs to 215 residues: Sperm acrosome membrane-associated protein 3 (215 aa).

Residues 1-63 (MVSALRGAPL…EARSRALRRR (63 aa)) lie on the Cytoplasmic side of the membrane. The helical; Signal-anchor for type II membrane protein transmembrane segment at 64 to 84 (WCPAGIMLLALVCLLSCLLPS) threads the bilayer. Over 85–215 (SEAKLYGRCE…LTEWVDGCDF (131 aa)) the chain is Extracellular. A C-type lysozyme domain is found at 88–215 (KLYGRCELAR…LTEWVDGCDF (128 aa)). Cystine bridges form between Cys-93-Cys-213, Cys-117-Cys-201, Cys-151-Cys-166, and Cys-162-Cys-180.

Belongs to the glycosyl hydrolase 22 family. Interacts with ASTL. Post-translationally, the processed form derives from the membrane form by proteolytic processing. The processed form is expressed in sperm (at protein level). Expressed in testis, epididymis and placenta.

The protein resides in the cytoplasmic vesicle. The protein localises to the secretory vesicle. It is found in the acrosome membrane. Its subcellular location is the secreted. Sperm surface membrane protein that may be involved in sperm-egg plasma membrane adhesion and fusion during fertilization. It could be a potential receptor for the egg oligosaccharide residue N-acetylglucosamine, which is present in the extracellular matrix over the egg plasma membrane. The processed form has no detectable bacteriolytic activity in vitro. The polypeptide is Sperm acrosome membrane-associated protein 3 (SPACA3) (Homo sapiens (Human)).